A 285-amino-acid polypeptide reads, in one-letter code: Bifunctional protein FolD (285 aa).

NADP(+) contacts are provided by residues 165–167 and S190; that span reads GRS.

Belongs to the tetrahydrofolate dehydrogenase/cyclohydrolase family. As to quaternary structure, homodimer.

The catalysed reaction is (6R)-5,10-methylene-5,6,7,8-tetrahydrofolate + NADP(+) = (6R)-5,10-methenyltetrahydrofolate + NADPH. The enzyme catalyses (6R)-5,10-methenyltetrahydrofolate + H2O = (6R)-10-formyltetrahydrofolate + H(+). It functions in the pathway one-carbon metabolism; tetrahydrofolate interconversion. Catalyzes the oxidation of 5,10-methylenetetrahydrofolate to 5,10-methenyltetrahydrofolate and then the hydrolysis of 5,10-methenyltetrahydrofolate to 10-formyltetrahydrofolate. The protein is Bifunctional protein FolD of Ligilactobacillus salivarius (strain UCC118) (Lactobacillus salivarius).